We begin with the raw amino-acid sequence, 712 residues long: DNA ligase (712 aa).

A compositionally biased stretch (low complexity) spans 1–22 (MSTQYDSDSSPAASNSGSADPA). The interval 1-23 (MSTQYDSDSSPAASNSGSADPAL) is disordered. An NAD(+)-binding site is contributed by 53–57 (DAEFD). A disordered region spans residues 69–93 (SHPEAVTGPSPTTEVAPSPPESSPF). NAD(+)-binding positions include 104-105 (SL) and glutamate 129. Lysine 131 acts as the N6-AMP-lysine intermediate in catalysis. The NAD(+) site is built by arginine 152, glutamate 192, lysine 308, and lysine 332. Residues cysteine 426, cysteine 429, cysteine 445, and cysteine 451 each contribute to the Zn(2+) site. The region spanning 624–712 (IQADLLAGLS…GPGKGDAEED (89 aa)) is the BRCT domain.

Belongs to the NAD-dependent DNA ligase family. LigA subfamily. It depends on Mg(2+) as a cofactor. Mn(2+) is required as a cofactor.

The enzyme catalyses NAD(+) + (deoxyribonucleotide)n-3'-hydroxyl + 5'-phospho-(deoxyribonucleotide)m = (deoxyribonucleotide)n+m + AMP + beta-nicotinamide D-nucleotide.. Its function is as follows. DNA ligase that catalyzes the formation of phosphodiester linkages between 5'-phosphoryl and 3'-hydroxyl groups in double-stranded DNA using NAD as a coenzyme and as the energy source for the reaction. It is essential for DNA replication and repair of damaged DNA. In Corynebacterium urealyticum (strain ATCC 43042 / DSM 7109), this protein is DNA ligase.